Reading from the N-terminus, the 127-residue chain is Oleate-induced peroxisomal protein POX18 (127 aa).

The SCP2 domain occupies 14–119; it reads FKELHEGLAD…KATAIESVFK (106 aa). Positions 33 to 41 are hydrophobic; sequence AVNAVIVIT. The hydrophilic stretch occupies residues 43–52; that stretch reads KNKEGKEQSW.

In terms of assembly, monomer.

It is found in the peroxisome. It participates in lipid metabolism; fatty acid metabolism. In terms of biological role, is involved in beta-oxidation of long-chain fatty acids. Its exact function is unknown, but possesses a nonspecific lipid-transfer activity, despite the absence of a cysteine residue thought to be essential for the activity of its mammalian counterparts. In Candida maltosa (Yeast), this protein is Oleate-induced peroxisomal protein POX18 (POX18).